A 741-amino-acid chain; its full sequence is Ethylene receptor (741 aa).

Transmembrane regions (helical) follow at residues 23 to 43 (ISDF…IYFV), 53 to 73 (WVLV…LINL), and 92 to 112 (VLTA…IPDL). Cu cation is bound by residues Cys65 and His69. One can recognise a GAF domain in the interval 158–307 (DRHTILKTTL…VVADQVAVAL (150 aa)). The Histidine kinase domain occupies 350–589 (VMNHEMRTPM…TFIVKLGFPE (240 aa)). Position 353 is a phosphohistidine; by autocatalysis (His353). Positions 615 to 732 (KVLVMDDNGV…KMRSVLSELL (118 aa)) constitute a Response regulatory domain. Position 663 is a 4-aspartylphosphate (Asp663).

The protein belongs to the ethylene receptor family. Homodimer; disulfide-linked. Cu cation is required as a cofactor. Post-translationally, activation probably requires a transfer of a phosphate group between a His in the transmitter domain and an Asp of the receiver domain.

The protein resides in the endoplasmic reticulum membrane. It carries out the reaction ATP + protein L-histidine = ADP + protein N-phospho-L-histidine.. In terms of biological role, may act early in the ethylene signal transduction pathway, possibly as an ethylene receptor, or as a regulator of the pathway. This chain is Ethylene receptor (ETR1), found in Malus domestica (Apple).